The primary structure comprises 23 residues: Thylakoid lumenal 17.4 kDa protein (23 aa).

Positions 1 to 23 (ANQRLPPLSNDPDRCERAFVGNT) are disordered.

The protein localises to the plastid. The protein resides in the chloroplast thylakoid lumen. The sequence is that of Thylakoid lumenal 17.4 kDa protein from Spinacia oleracea (Spinach).